An 876-amino-acid chain; its full sequence is DNA topoisomerase 1 (876 aa).

Residues 3–150 (KSLVIVESPA…RYKRVVFNEI (148 aa)) form the Toprim domain. Residue Glu-9 participates in Mg(2+) binding. The tract at residues 37–69 (LPTAGQTATPTGKAAAASTKKASTTDKEQQKRE) is disordered. Residues 38-58 (PTAGQTATPTGKAAAASTKKA) are compositionally biased toward low complexity. Positions 59–69 (STTDKEQQKRE) are enriched in basic and acidic residues. Asp-119 contributes to the Mg(2+) binding site. In terms of domain architecture, Topo IA-type catalytic spans 166–582 (NMDGVNAQQA…EFFADFSRDL (417 aa)). Positions 200-205 (SAGRVQ) are interaction with DNA. The O-(5'-phospho-DNA)-tyrosine intermediate role is filled by Tyr-327. C4-type zinc fingers lie at residues 668-695 (CPIC…NPNC) and 717-742 (CDKC…NDAC).

This sequence belongs to the type IA topoisomerase family. Monomer. It depends on Mg(2+) as a cofactor.

It carries out the reaction ATP-independent breakage of single-stranded DNA, followed by passage and rejoining.. Its function is as follows. Releases the supercoiling and torsional tension of DNA, which is introduced during the DNA replication and transcription, by transiently cleaving and rejoining one strand of the DNA duplex. Introduces a single-strand break via transesterification at a target site in duplex DNA. The scissile phosphodiester is attacked by the catalytic tyrosine of the enzyme, resulting in the formation of a DNA-(5'-phosphotyrosyl)-enzyme intermediate and the expulsion of a 3'-OH DNA strand. The free DNA strand then undergoes passage around the unbroken strand, thus removing DNA supercoils. Finally, in the religation step, the DNA 3'-OH attacks the covalent intermediate to expel the active-site tyrosine and restore the DNA phosphodiester backbone. This is DNA topoisomerase 1 from Vibrio cholerae serotype O1 (strain ATCC 39315 / El Tor Inaba N16961).